A 352-amino-acid chain; its full sequence is MSGNTFGALFTVTTFGESHGPAIGCVVDGCPPGMSLTEADIQPFLDKRKPGQSKYTTQRREEDKVQILSGVFDGKTTGAPIALLIQNTDQRSRDYEDIKNLFRPGHADFTYHYKYGHRDYRGGGRSSARETAARVAAGAIARLYLKRYLNLDIIGYLQQMGDLKLQFENENEIDKNPFFCPNNKQIQELADYVDRLRRQGDSVGARVKILARGVPTGLGDPVFDKLDATLAYAMMSINAVKGVEIGAGFNAVEQLGSHHRDQMTAKGFLSNHAGGILGGIATGQPIEVSIALKPTSSITTPGQTINTEGEEVTVVTKGRHDPCVGIRAVPIAEAMMALVLMDHYLRHKAQCK.

Arg-48 contacts NADP(+). FMN-binding positions include 125–127 (RSS), 238–239 (NA), Gly-278, 293–297 (KPTSS), and Arg-319.

This sequence belongs to the chorismate synthase family. In terms of assembly, homotetramer. Requires FMNH2 as cofactor.

It carries out the reaction 5-O-(1-carboxyvinyl)-3-phosphoshikimate = chorismate + phosphate. The protein operates within metabolic intermediate biosynthesis; chorismate biosynthesis; chorismate from D-erythrose 4-phosphate and phosphoenolpyruvate: step 7/7. In terms of biological role, catalyzes the anti-1,4-elimination of the C-3 phosphate and the C-6 proR hydrogen from 5-enolpyruvylshikimate-3-phosphate (EPSP) to yield chorismate, which is the branch point compound that serves as the starting substrate for the three terminal pathways of aromatic amino acid biosynthesis. This reaction introduces a second double bond into the aromatic ring system. In Legionella pneumophila (strain Lens), this protein is Chorismate synthase.